The sequence spans 483 residues: HSPB1-associated protein 1 (483 aa).

Residues 1-26 (MAAGCEGIAPPTLGERTVGEEGEPVK) form a disordered region. The tract at residues 88 to 208 (ETECSYVDAT…EDTPFLYPTR (121 aa)) is interaction with HSPB1. The JmjC domain occupies 124–288 (WAYADYKYFV…HLARVEEAIT (165 aa)). The tract at residues 388-416 (LIPVTPASEERGGALEGDSEESVSSNGGH) is disordered.

As to quaternary structure, interacts with CRYAB and HSPB1.

It is found in the cytoplasm. Functionally, may play a role in cellular stress response. This chain is HSPB1-associated protein 1 (Hspbap1), found in Mus musculus (Mouse).